The sequence spans 813 residues: Enhancer of polycomb homolog 1 (813 aa).

3 disordered regions span residues 310–403, 484–513, and 528–577; these read FKHQ…PFAF, MLSS…SKDL, and FRPR…SSGS. The span at 311–333 shows a compositional bias: basic and acidic residues; the sequence is KHQDATDSKEFKVNKQDKADLIR. Lysine 319 is covalently cross-linked (Glycyl lysine isopeptide (Lys-Gly) (interchain with G-Cter in SUMO2)). Residues 346-361 show a composition bias toward low complexity; the sequence is PPSAAAPQQQSPAALP. A compositionally biased stretch (polar residues) spans 486–513; it reads SSPQPSPVNQFANTSEPNTSDRSSSKDL. Serine 538 carries the post-translational modification Phosphoserine. Positions 564–577 are enriched in low complexity; the sequence is TCSTSTQNRSSSGS. Lysine 650 is covalently cross-linked (Glycyl lysine isopeptide (Lys-Gly) (interchain with G-Cter in SUMO2)). The segment at 779–813 is disordered; that stretch reads VPSSSSVDSVPRENHESEKPALNNIADNTVAMEVT. The span at 788 to 797 shows a compositional bias: basic and acidic residues; the sequence is VPRENHESEK.

The protein belongs to the enhancer of polycomb family. As to quaternary structure, component of the NuA4 histone acetyltransferase complex which contains the catalytic subunit KAT5/TIP60 and the subunits EP400, TRRAP/PAF400, BRD8/SMAP, EPC1, DMAP1/DNMAP1, RUVBL1/TIP49, RUVBL2, ING3, actin, ACTL6A/BAF53A, MORF4L1/MRG15, MORF4L2/MRGX, MRGBP, YEATS4/GAS41, VPS72/YL1 and MEAF6. KAT5/TIP60, EPC1, and ING3 together constitute a minimal HAT complex termed Piccolo NuA4. Component of a NuA4-related complex which contains EP400, TRRAP/PAF400, SRCAP, BRD8/SMAP, EPC1, DMAP1/DNMAP1, RUVBL1/TIP49, RUVBL2, actin, ACTL6A/BAF53A, VPS72 and YEATS4/GAS41. Interacts with TRIM27. Interacts with MBTD1; interaction is direct and promotes recruitment of MBTD1 into the NuA4 histone acetyltransferase complex. In terms of tissue distribution, expressed in adult brain, heart, kidney, liver, lung, skeletal muscle and testis. Expressed in male germ cells, present in round spermatids of steps 1 to 4.

Its subcellular location is the nucleus. The protein localises to the cytoplasm. Functionally, component of the NuA4 histone acetyltransferase (HAT) complex, a multiprotein complex involved in transcriptional activation of select genes principally by acetylation of nucleosomal histones H4 and H2A. The NuA4 complex plays a direct role in repair of DNA double-strand breaks (DSBs) by promoting homologous recombination (HR). The NuA4 complex is also required for spermatid development by promoting acetylation of histones: histone acetylation is required for histone replacement during the transition from round to elongating spermatids. In the NuA4 complex, EPC1 is required to recruit MBTD1 into the complex. The sequence is that of Enhancer of polycomb homolog 1 from Mus musculus (Mouse).